A 62-amino-acid chain; its full sequence is Small ribosomal subunit protein bS21C (62 aa).

Positions 43–62 are disordered; the sequence is EKSKRKKLALHKQSKRRFRT. The segment covering 45-62 has biased composition (basic residues); that stretch reads SKRKKLALHKQSKRRFRT.

It belongs to the bacterial ribosomal protein bS21 family.

This Trichormus variabilis (strain ATCC 29413 / PCC 7937) (Anabaena variabilis) protein is Small ribosomal subunit protein bS21C.